The following is a 321-amino-acid chain: Hydropyrene synthase (321 aa).

The Mg(2+) site is built by Asp82, Asn225, Ser229, and Glu233. A DDxx(x)D/E motif motif is present at residues 82 to 87; it reads DDRAID. An NDxxSxxxD/E motif motif is present at residues 225–233; sequence NDLHSFARE.

This sequence belongs to the terpene synthase family. The cofactor is Mg(2+).

The enzyme catalyses (2E,6E,10E)-geranylgeranyl diphosphate = hydropyrene + diphosphate. It carries out the reaction (2E,6E,10E)-geranylgeranyl diphosphate + H2O = hydropyrenol + diphosphate. The catalysed reaction is (2E,6E,10E)-geranylgeranyl diphosphate = isoelisabethatriene + diphosphate. Its pathway is secondary metabolite biosynthesis; terpenoid biosynthesis. In terms of biological role, terpene synthase that catalyzes the conversion of geranylgeranyl diphosphate (GGPP) into a mixture of diterpenes, including hydropyrene (HP), hydropyrenol (HPol), isoelisabethatriene and traces of isoelisabethatriene B. Hydropyrene is the main product. Some other diterpenoids are also produced in very low quantities. The chain is Hydropyrene synthase from Streptomyces clavuligerus.